The sequence spans 331 residues: Mucin-15 (331 aa).

An N-terminal signal peptide occupies residues Met-1–Pro-22. The Extracellular portion of the chain corresponds to Gln-23 to Thr-233. N-linked (GlcNAc...) asparagine glycosylation is found at Asn-30, Asn-44, Asn-54, Asn-59, Asn-75, Asn-84, Asn-120, Asn-136, Asn-145, Asn-152, Asn-215, and Asn-222. The segment covering Ala-124–Ser-162 has biased composition (polar residues). The interval Ala-124–Glu-186 is disordered. Residues Gly-234–Gly-254 form a helical membrane-spanning segment. Residues Tyr-255–Ile-331 are Cytoplasmic-facing. The disordered stretch occupies residues Ala-302–Ile-331.

Post-translationally, highly glycosylated (N- and O-linked carbohydrates).

Its subcellular location is the membrane. This is Mucin-15 (Muc15) from Mus musculus (Mouse).